The chain runs to 249 residues: Sugar fermentation stimulation protein homolog (249 aa).

This sequence belongs to the SfsA family.

The polypeptide is Sugar fermentation stimulation protein homolog (Prochlorococcus marinus (strain MIT 9515)).